The primary structure comprises 264 residues: Thiazole synthase (264 aa).

Lysine 106 (schiff-base intermediate with DXP) is an active-site residue. Residues glycine 167, 193 to 194, and 215 to 216 each bind 1-deoxy-D-xylulose 5-phosphate; these read AG and NS.

Belongs to the ThiG family. Homotetramer. Forms heterodimers with either ThiH or ThiS.

The protein localises to the cytoplasm. It catalyses the reaction [ThiS sulfur-carrier protein]-C-terminal-Gly-aminoethanethioate + 2-iminoacetate + 1-deoxy-D-xylulose 5-phosphate = [ThiS sulfur-carrier protein]-C-terminal Gly-Gly + 2-[(2R,5Z)-2-carboxy-4-methylthiazol-5(2H)-ylidene]ethyl phosphate + 2 H2O + H(+). It participates in cofactor biosynthesis; thiamine diphosphate biosynthesis. Functionally, catalyzes the rearrangement of 1-deoxy-D-xylulose 5-phosphate (DXP) to produce the thiazole phosphate moiety of thiamine. Sulfur is provided by the thiocarboxylate moiety of the carrier protein ThiS. In vitro, sulfur can be provided by H(2)S. The protein is Thiazole synthase of Pseudomonas fluorescens (strain Pf0-1).